A 205-amino-acid chain; its full sequence is Large ribosomal subunit protein uL4 (205 aa).

The tract at residues 45 to 97 is disordered; that stretch reads RQGTSAVKNRSAVRGGGKKPWRQKGTGRARQGSIRAPQWRGGGTVFGPTPRSY. The span at 60-71 shows a compositional bias: basic residues; that stretch reads GGKKPWRQKGTG.

It belongs to the universal ribosomal protein uL4 family. As to quaternary structure, part of the 50S ribosomal subunit.

Functionally, one of the primary rRNA binding proteins, this protein initially binds near the 5'-end of the 23S rRNA. It is important during the early stages of 50S assembly. It makes multiple contacts with different domains of the 23S rRNA in the assembled 50S subunit and ribosome. In terms of biological role, forms part of the polypeptide exit tunnel. In Lactobacillus johnsonii (strain CNCM I-12250 / La1 / NCC 533), this protein is Large ribosomal subunit protein uL4.